Consider the following 396-residue polypeptide: Imidazolonepropionase (396 aa).

Residues H69 and H71 each contribute to the Fe(3+) site. Zn(2+)-binding residues include H69 and H71. 4-imidazolone-5-propanoate-binding residues include R78, Y136, and H163. Position 136 (Y136) interacts with N-formimidoyl-L-glutamate. H224 serves as a coordination point for Fe(3+). H224 provides a ligand contact to Zn(2+). Q227 is a binding site for 4-imidazolone-5-propanoate. Residue D298 coordinates Fe(3+). D298 is a binding site for Zn(2+). Residues N300 and G302 each coordinate N-formimidoyl-L-glutamate. T303 provides a ligand contact to 4-imidazolone-5-propanoate.

Belongs to the metallo-dependent hydrolases superfamily. HutI family. Requires Zn(2+) as cofactor. Fe(3+) serves as cofactor.

The protein localises to the cytoplasm. The catalysed reaction is 4-imidazolone-5-propanoate + H2O = N-formimidoyl-L-glutamate. It functions in the pathway amino-acid degradation; L-histidine degradation into L-glutamate; N-formimidoyl-L-glutamate from L-histidine: step 3/3. In terms of biological role, catalyzes the hydrolytic cleavage of the carbon-nitrogen bond in imidazolone-5-propanoate to yield N-formimidoyl-L-glutamate. It is the third step in the universal histidine degradation pathway. This Cutibacterium acnes (strain DSM 16379 / KPA171202) (Propionibacterium acnes) protein is Imidazolonepropionase.